Here is a 189-residue protein sequence, read N- to C-terminus: MPKTRRGPRRSQRKRPPTPWPTSQGLDKVFFTDIQSTCLETVYKATGAPSLGDYVRPAYIVTPYWPPVQSIRSPRTPSMDALSAQLYSSLSLGSPPSPPREPLKPSRSLPHRPLIQPPTFHPPSSRPYANTPPSEMGAWSPPLGSSSQACPSPTPASGPKTCTPSGEAPSSACTSISFPPPSPGPSCPR.

Residues 1–16 are compositionally biased toward basic residues; sequence MPKTRRGPRRSQRKRP. The tract at residues 1–26 is disordered; it reads MPKTRRGPRRSQRKRPPTPWPTSQGL. A Nuclear localization signal, and RNA-binding (RxRE) motif is present at residues 2-18; that stretch reads PKTRRGPRRSQRKRPPT. The tract at residues 56-70 is homomultimerization; sequence RPAYIVTPYWPPVQS. At S70 the chain carries Phosphoserine; by host. Residues 82 to 93 carry the Nuclear export signal motif; it reads LSAQLYSSLSLG. The disordered stretch occupies residues 87-189; it reads YSSLSLGSPP…PPSPGPSCPR (103 aa). The segment covering 115–125 has biased composition (pro residues); that stretch reads IQPPTFHPPSS. The segment at 123-131 is homomultimerization; sequence PSSRPYANT. Position 174 is a phosphothreonine; by host (T174). S177 carries the post-translational modification Phosphoserine; by host. Pro residues predominate over residues 178–189; it reads FPPPSPGPSCPR.

It belongs to the deltaretrovirus Rex protein family. In terms of assembly, homomultimer. Multimeric assembly is essential for activity and involves XPO1. Binds to human XPO1 and KPNB1. Interacts (via N-terminal nuclear localization signal) with human NPM1. In terms of processing, phosphorylated.

Its subcellular location is the host nucleus. The protein localises to the host nucleolus. The protein resides in the host cytoplasm. Rex escorts unspliced gag-pro-pol and singly spliced env mRNAs out of the nucleus of infected cells. These mRNAs carry a recognition sequence called Rex responsive element (RxRE or XRE) located at the 3' region of the long terminal repeat (LTR). This function is essential since most HTLV proteins are translated from unspliced or partially spliced pre-mRNAs that cannot exit the nucleus by the pathway used by fully processed cellular mRNAs. Rex itself is translated from a fully spliced mRNA that probably readily exits the nucleus. Rex's nuclear localization signal (NLS) binds directly to KPNB1/importin beta-1 without previous binding to KPNA1/importin alpha-1. KPNB1 binds to the GDP bound form of RAN (Ran-GDP) and targets Rex to the nucleus. In the nucleus, the conversion from Ran-GDP to Ran-GTP dissociates Rex from KPNB1 and allows Rex's binding to the RRE in viral pre-mRNAs. Rex multimerizes on the RRE via cooperative assembly. This multimerization is critical for its full biological activity, since it may shield the viral RNA from being spliced or down-regulated, and probably exposes Rex's nuclear export signal (NES) to the surface. Rex can then form a complex with XPO1/CRM1, RANBP3 and Ran-GTP, leading to nuclear export of the complex. Conversion from Ran-GTP to Ran-GDP mediates dissociation of the Rex/RRE/XPO1/RANBP3/RAN complex, so that Rex can return to the nucleus for a subsequent round of export. The polypeptide is Protein Rex (Homo sapiens (Human)).